The chain runs to 176 residues: UBA-like domain-containing protein 1 (176 aa).

Low complexity-rich tracts occupy residues 88-105 (ESFH…TSAT) and 120-137 (TPSW…QHLQ). The interval 88–176 (ESFHSGGSSG…RAHPAMEAER (89 aa)) is disordered. Residues 138 to 150 (PQPPLWTPAPPSP) are compositionally biased toward pro residues. The segment covering 166-176 (PRAHPAMEAER) has biased composition (basic and acidic residues).

It belongs to the UBALD family.

The protein is UBA-like domain-containing protein 1 (Ubald1) of Rattus norvegicus (Rat).